We begin with the raw amino-acid sequence, 249 residues long: Ribonuclease 3 (249 aa).

Residues 21-149 (VDHQPLIDAL…LLGAIYLAHG (129 aa)) form the RNase III domain. Residue glutamate 62 participates in Mg(2+) binding. Aspartate 66 is a catalytic residue. Mg(2+) is bound by residues aspartate 135 and glutamate 138. Residue glutamate 138 is part of the active site. Residues 176-244 (DWKTTLQERL…AHKAVGFLQD (69 aa)) form the DRBM domain.

Belongs to the ribonuclease III family. Homodimer. Mg(2+) is required as a cofactor.

The protein localises to the cytoplasm. It catalyses the reaction Endonucleolytic cleavage to 5'-phosphomonoester.. Functionally, digests double-stranded RNA. Involved in the processing of primary rRNA transcript to yield the immediate precursors to the large and small rRNAs (23S and 16S). Processes some mRNAs, and tRNAs when they are encoded in the rRNA operon. Processes pre-crRNA and tracrRNA of type II CRISPR loci if present in the organism. The polypeptide is Ribonuclease 3 (Corynebacterium diphtheriae (strain ATCC 700971 / NCTC 13129 / Biotype gravis)).